We begin with the raw amino-acid sequence, 194 residues long: Orotate phosphoribosyltransferase (194 aa).

5-phospho-alpha-D-ribose 1-diphosphate-binding positions include R102, K103, K106, H108, and 129–137 (EDVVTTGGS). Residues T133 and R161 each contribute to the orotate site.

Belongs to the purine/pyrimidine phosphoribosyltransferase family. PyrE subfamily. As to quaternary structure, homodimer. Mg(2+) is required as a cofactor.

The catalysed reaction is orotidine 5'-phosphate + diphosphate = orotate + 5-phospho-alpha-D-ribose 1-diphosphate. It participates in pyrimidine metabolism; UMP biosynthesis via de novo pathway; UMP from orotate: step 1/2. Its function is as follows. Catalyzes the transfer of a ribosyl phosphate group from 5-phosphoribose 1-diphosphate to orotate, leading to the formation of orotidine monophosphate (OMP). In Synechococcus sp. (strain CC9902), this protein is Orotate phosphoribosyltransferase.